The sequence spans 430 residues: MGYLFTSESVSEGHPDKVADQISDAVLDKLLAYDPSSKVACETLVTTGQVVLAGEVKTGAYVDLQLIAREVIQKIGYTKGEYMFESNSCGVLSAIHEQSADINRGVEREDPMNQGAGDQGMMFGYATNETENYMPLSLDLAHRILLVLADIRREGKEMTYLRPDAKSQVTIEYDDNGTPVRIDTIVVSTQHDEFILPADNSAAAQLKADEEMLAVIRKDVIEVLMPRVIASINHPKVLALFNDHIIYHVNPTGKFVIGGPHGDTGLTGRKIIVDTYGGKGAHGGGAFSGKDPSKVDRSAAYAARHIAKNLVAAGVADEMLVQVSYAIGVARPINIYVNTYGRSNVKMSDGEIARKIDELFDLRPKAIEDRLKLRYPIYSETAAYGHMGREPQMVTKHFQSRYEGDRTMEVELFTWEKLDYVDKVKAAFGL.

His-14 serves as a coordination point for ATP. Asp-16 serves as a coordination point for Mg(2+). Residue Glu-42 coordinates K(+). Glu-55 and Gln-98 together coordinate L-methionine. The flexible loop stretch occupies residues 98–108 (QSADINRGVER). ATP is bound by residues 164–166 (DAK), 254–255 (KF), Asp-263, 269–270 (RK), Ala-286, and Lys-290. An L-methionine-binding site is contributed by Asp-263. L-methionine is bound at residue Lys-294.

Belongs to the AdoMet synthase family. As to quaternary structure, homotetramer; dimer of dimers. It depends on Mg(2+) as a cofactor. K(+) serves as cofactor.

The protein resides in the cytoplasm. It carries out the reaction L-methionine + ATP + H2O = S-adenosyl-L-methionine + phosphate + diphosphate. It participates in amino-acid biosynthesis; S-adenosyl-L-methionine biosynthesis; S-adenosyl-L-methionine from L-methionine: step 1/1. Functionally, catalyzes the formation of S-adenosylmethionine (AdoMet) from methionine and ATP. The overall synthetic reaction is composed of two sequential steps, AdoMet formation and the subsequent tripolyphosphate hydrolysis which occurs prior to release of AdoMet from the enzyme. This Bacteroides fragilis (strain ATCC 25285 / DSM 2151 / CCUG 4856 / JCM 11019 / LMG 10263 / NCTC 9343 / Onslow / VPI 2553 / EN-2) protein is S-adenosylmethionine synthase.